Reading from the N-terminus, the 91-residue chain is Small ribosomal subunit protein uS15 (91 aa).

This sequence belongs to the universal ribosomal protein uS15 family. Part of the 30S ribosomal subunit. Forms a bridge to the 50S subunit in the 70S ribosome, contacting the 23S rRNA.

One of the primary rRNA binding proteins, it binds directly to 16S rRNA where it helps nucleate assembly of the platform of the 30S subunit by binding and bridging several RNA helices of the 16S rRNA. Its function is as follows. Forms an intersubunit bridge (bridge B4) with the 23S rRNA of the 50S subunit in the ribosome. This is Small ribosomal subunit protein uS15 from Rickettsia prowazekii (strain Madrid E).